The chain runs to 692 residues: Elongation factor G (692 aa).

The tr-type G domain maps to Glu8 to Leu282. GTP contacts are provided by residues Ala17–Thr24, Asp81–His85, and Asn135–Asp138.

The protein belongs to the TRAFAC class translation factor GTPase superfamily. Classic translation factor GTPase family. EF-G/EF-2 subfamily.

It is found in the cytoplasm. In terms of biological role, catalyzes the GTP-dependent ribosomal translocation step during translation elongation. During this step, the ribosome changes from the pre-translocational (PRE) to the post-translocational (POST) state as the newly formed A-site-bound peptidyl-tRNA and P-site-bound deacylated tRNA move to the P and E sites, respectively. Catalyzes the coordinated movement of the two tRNA molecules, the mRNA and conformational changes in the ribosome. This is Elongation factor G from Bacillus cytotoxicus (strain DSM 22905 / CIP 110041 / 391-98 / NVH 391-98).